The sequence spans 402 residues: LIM/homeobox protein Lhx5 (402 aa).

LIM zinc-binding domains lie at 3–61 (AHCA…RRFG) and 62–125 (TKCA…ASSL). Disordered stretches follow at residues 133-187 (VSSC…RTTI), 291-335 (NYDF…GHHP), and 365-392 (SGEV…LPHQ). The span at 151–167 (DESKETDHSTSSDKETA) shows a compositional bias: basic and acidic residues. The homeobox DNA-binding region spans 180–239 (RRGPRTTIKAKQLETLKAAFIATPKPTRHIREQLAQETGLNMRVIQVWFQNRRSKERRMK). A compositionally biased stretch (polar residues) spans 300-319 (PSSQTQSPADSSYLQNSGPG).

In terms of assembly, interacts with ldb1 and with the N-terminus of rnf12.

It is found in the nucleus. In terms of biological role, probably involved in the patterning of the nervous system, in particular in the early specification of the diencephalon. The sequence is that of LIM/homeobox protein Lhx5 (lhx5) from Xenopus laevis (African clawed frog).